A 388-amino-acid chain; its full sequence is F-box/kelch-repeat protein At3g17530 (388 aa).

In terms of domain architecture, F-box spans 1–50 (MMISDLPHDLESEILSRVPAKSLAKWKTTCKRWYALFRDPSFVKKNFDKA). Kelch repeat units lie at residues 163–208 (CCYY…VSLK) and 336–383 (RIYI…AEEN).

The protein is F-box/kelch-repeat protein At3g17530 of Arabidopsis thaliana (Mouse-ear cress).